The chain runs to 907 residues: Probable dipeptidyl-aminopeptidase B (907 aa).

Residues 1-11 (MYDQVPYRDTD) are compositionally biased toward basic and acidic residues. Residues 1-71 (MYDQVPYRDT…RGKPDEDDDL (71 aa)) are disordered. The Cytoplasmic portion of the chain corresponds to 1-88 (MYDQVPYRDT…LKPMERKVRR (88 aa)). Residues 22–36 (SDSNRSSIDTTSTTS) show a composition bias toward low complexity. Residues 89 to 109 (AMYLLAFLMIGGWFLALAVYV) traverse the membrane as a helical; Signal-anchor for type II membrane protein segment. At 110–907 (SREHFGTPDT…PLRKRNRELV (798 aa)) the chain is on the vacuolar side. Asn-185 and Asn-341 each carry an N-linked (GlcNAc...) asparagine glycan. Catalysis depends on Ser-746, which acts as the Charge relay system. Asn-800 carries N-linked (GlcNAc...) asparagine glycosylation. Residues Asp-823 and His-856 each act as charge relay system in the active site.

Belongs to the peptidase S9B family.

Its subcellular location is the vacuole membrane. It carries out the reaction Release of an N-terminal dipeptide, Xaa-Yaa-|-Zaa-, from a polypeptide, preferentially when Yaa is Pro, provided Zaa is neither Pro nor hydroxyproline.. In terms of biological role, type IV dipeptidyl-peptidase which removes N-terminal dipeptides sequentially from polypeptides having unsubstituted N-termini provided that the penultimate residue is proline. The sequence is that of Probable dipeptidyl-aminopeptidase B (DAPB) from Tuber melanosporum (strain Mel28) (Perigord black truffle).